We begin with the raw amino-acid sequence, 415 residues long: MSNVKDMSLAPSGHLKMEWAKRHMPVLCRIAEEFKNDKPFEGLTIGMALHLEAKTAILAETLLEGGAKIVITGCNPLSTQDDVAAACVEKGMEVYAWRGETNEEYYENLNKVLDSNPDIIIDDGADLIFLIHTERTELIGKIMGGCEETTTGIIRLKSMAEEGALKFPVVNVNDAYTKHLFDNRYGTGQSAMDGIIRTTNLLIAGKNVVVGGYGWCGRGVASRAAGHGANVIITEVNPIRALEAKMDGFTVLKMEEAAKIGDIFVTTTGCKDILRMEHFLLMKDGAVLSNAGHFDNEINKNDLKELSKSVKEARFNIEEYDLGNKKIYLLGEGRLVNLACADGHPCEVMDMSFANQALSAKFIKENKGKLENEVYEIPYEQDFKIALLKLHSMGADIDELSPEQRKYLSDWKEGT.

The substrate site is built by D123 and E148. T149–T151 is a binding site for NAD(+). K178 and D182 together coordinate substrate. NAD(+) contacts are provided by residues N183, G212–G217, E235, A291–H293, and N337.

It belongs to the adenosylhomocysteinase family. The cofactor is NAD(+).

Its subcellular location is the cytoplasm. The catalysed reaction is S-inosyl-L-homocysteine + H2O = L-homocysteine + inosine. It functions in the pathway amino-acid biosynthesis; S-adenosyl-L-methionine biosynthesis. Its function is as follows. Catalyzes the hydrolysis of S-inosyl-L-homocysteine (SIH) to L-homocysteine (Hcy) and inosine. Likely functions in a S-adenosyl-L-methionine (SAM) recycling pathway from S-adenosyl-L-homocysteine (SAH) produced from SAM-dependent methylation reactions. Can also catalyze the reverse reaction in vitro, i.e. the synthesis of SIH from Hcy and inosine. The chain is S-inosyl-L-homocysteine hydrolase from Methanococcus maripaludis (strain DSM 14266 / JCM 13030 / NBRC 101832 / S2 / LL).